We begin with the raw amino-acid sequence, 106 residues long: MYAVLVTGGKQYRVAQGETLRVEKLEVEAGNEIKFDTVLMLGDSDGIKLGDALKGASVTAKVVAHGRADKVRIIKFRRRKHHMKRQGHRQHYTEIEITGIAGGDKK.

Belongs to the bacterial ribosomal protein bL21 family. As to quaternary structure, part of the 50S ribosomal subunit. Contacts protein L20.

Its function is as follows. This protein binds to 23S rRNA in the presence of protein L20. The protein is Large ribosomal subunit protein bL21 of Xanthomonas oryzae pv. oryzae (strain MAFF 311018).